Here is a 200-residue protein sequence, read N- to C-terminus: Non-specific lipid transfer protein GPI-anchored 16 (200 aa).

The signal sequence occupies residues 1–20 (MEGLTLIVVMMSSFMLGGQG). Disulfide bonds link cysteine 27–cysteine 72, cysteine 38–cysteine 56, cysteine 57–cysteine 98, and cysteine 70–cysteine 107. N-linked (GlcNAc...) asparagine glycosylation is present at asparagine 87. The interval 134–182 (SPGASKAAGTTPTQAPAPDTPADGPTGPTTKSGIRPVDQPMQPTGLAQS) is disordered. A compositionally biased stretch (low complexity) spans 140-163 (AAGTTPTQAPAPDTPADGPTGPTT). Threonine 177 carries GPI-anchor amidated threonine lipidation. A propeptide spans 178-200 (GLAQSSTSPFLPLLFISLILLNL) (removed in mature form).

Belongs to the plant LTP family. In terms of tissue distribution, expressed in seedlings, preferentially in hypocotyls and roots. Also observed in siliques.

The protein localises to the cell membrane. Functionally, essential protein involved in female gametophyte development. Probable lipid transfer protein. The chain is Non-specific lipid transfer protein GPI-anchored 16 from Arabidopsis thaliana (Mouse-ear cress).